A 433-amino-acid chain; its full sequence is Zinc finger protein CONSTANS-LIKE 15 (433 aa).

Positions 9, 12, 32, 37, 52, 55, 75, and 80 each coordinate Zn(2+). Residues Cys-9–Ile-51 form a B box-type 1; atypical zinc finger. The segment at Cys-52–Val-94 adopts a B box-type 2; atypical zinc-finger fold. The tract at residues Asp-319–Ser-353 is disordered. Positions Ser-324–Pro-340 are enriched in polar residues. Residues Thr-374–Thr-398 are a coiled coil. The CCT domain occupies Arg-385–Ala-427.

It belongs to the CONSTANS family.

Its subcellular location is the nucleus. The polypeptide is Zinc finger protein CONSTANS-LIKE 15 (COL15) (Arabidopsis thaliana (Mouse-ear cress)).